The chain runs to 510 residues: NAD(P)H-quinone oxidoreductase subunit 2 B, chloroplastic (510 aa).

13 helical membrane passes run 24–44, 57–77, 99–119, 124–144, 150–170, 183–203, 229–249, 295–315, 323–343, 347–367, 395–415, 418–438, and 484–504; these read LLLF…GLIL, IPWL…ALLF, IFQF…VEYI, MAIT…MFLC, ITIF…SGYT, YLLM…WLYG, ISIA…PAPF, WHLL…LVAI, MLAY…IVGD, GYAS…GTFA, ALSS…AGFF, LHLF…IGLL, and MIVC…IIAI.

It belongs to the complex I subunit 2 family. In terms of assembly, NDH is composed of at least 16 different subunits, 5 of which are encoded in the nucleus.

The protein resides in the plastid. It localises to the chloroplast thylakoid membrane. The catalysed reaction is a plastoquinone + NADH + (n+1) H(+)(in) = a plastoquinol + NAD(+) + n H(+)(out). It catalyses the reaction a plastoquinone + NADPH + (n+1) H(+)(in) = a plastoquinol + NADP(+) + n H(+)(out). In terms of biological role, NDH shuttles electrons from NAD(P)H:plastoquinone, via FMN and iron-sulfur (Fe-S) centers, to quinones in the photosynthetic chain and possibly in a chloroplast respiratory chain. The immediate electron acceptor for the enzyme in this species is believed to be plastoquinone. Couples the redox reaction to proton translocation, and thus conserves the redox energy in a proton gradient. The polypeptide is NAD(P)H-quinone oxidoreductase subunit 2 B, chloroplastic (Ceratophyllum demersum (Rigid hornwort)).